We begin with the raw amino-acid sequence, 367 residues long: Glutamate 5-kinase (367 aa).

Position 10 (lysine 10) interacts with ATP. Residues serine 50, aspartate 137, and asparagine 149 each contribute to the substrate site. Residues 169-170 (TD) and 211-217 (TGGMSTK) each bind ATP. The PUA domain occupies 275 to 353 (AGEITVDDGA…QQIAEILGYE (79 aa)).

It belongs to the glutamate 5-kinase family.

The protein localises to the cytoplasm. It carries out the reaction L-glutamate + ATP = L-glutamyl 5-phosphate + ADP. The protein operates within amino-acid biosynthesis; L-proline biosynthesis; L-glutamate 5-semialdehyde from L-glutamate: step 1/2. Functionally, catalyzes the transfer of a phosphate group to glutamate to form L-glutamate 5-phosphate. The sequence is that of Glutamate 5-kinase from Pectobacterium atrosepticum (strain SCRI 1043 / ATCC BAA-672) (Erwinia carotovora subsp. atroseptica).